The chain runs to 299 residues: Phosphatidylserine decarboxylase proenzyme (299 aa).

Catalysis depends on charge relay system; for autoendoproteolytic cleavage activity residues D115, H171, and S258. The active-site Schiff-base intermediate with substrate; via pyruvic acid; for decarboxylase activity is S258. S258 carries the post-translational modification Pyruvic acid (Ser); by autocatalysis.

This sequence belongs to the phosphatidylserine decarboxylase family. PSD-B subfamily. Prokaryotic type II sub-subfamily. Heterodimer of a large membrane-associated beta subunit and a small pyruvoyl-containing alpha subunit. The cofactor is pyruvate. Post-translationally, is synthesized initially as an inactive proenzyme. Formation of the active enzyme involves a self-maturation process in which the active site pyruvoyl group is generated from an internal serine residue via an autocatalytic post-translational modification. Two non-identical subunits are generated from the proenzyme in this reaction, and the pyruvate is formed at the N-terminus of the alpha chain, which is derived from the carboxyl end of the proenzyme. The autoendoproteolytic cleavage occurs by a canonical serine protease mechanism, in which the side chain hydroxyl group of the serine supplies its oxygen atom to form the C-terminus of the beta chain, while the remainder of the serine residue undergoes an oxidative deamination to produce ammonia and the pyruvoyl prosthetic group on the alpha chain. During this reaction, the Ser that is part of the protease active site of the proenzyme becomes the pyruvoyl prosthetic group, which constitutes an essential element of the active site of the mature decarboxylase.

It localises to the cell membrane. The enzyme catalyses a 1,2-diacyl-sn-glycero-3-phospho-L-serine + H(+) = a 1,2-diacyl-sn-glycero-3-phosphoethanolamine + CO2. The protein operates within phospholipid metabolism; phosphatidylethanolamine biosynthesis; phosphatidylethanolamine from CDP-diacylglycerol: step 2/2. In terms of biological role, catalyzes the formation of phosphatidylethanolamine (PtdEtn) from phosphatidylserine (PtdSer). In Chlamydia felis (strain Fe/C-56) (Chlamydophila felis), this protein is Phosphatidylserine decarboxylase proenzyme.